The sequence spans 229 residues: Large ribosomal subunit protein uL1 (229 aa).

Belongs to the universal ribosomal protein uL1 family. In terms of assembly, part of the 50S ribosomal subunit.

Functionally, binds directly to 23S rRNA. The L1 stalk is quite mobile in the ribosome, and is involved in E site tRNA release. Protein L1 is also a translational repressor protein, it controls the translation of the L11 operon by binding to its mRNA. This chain is Large ribosomal subunit protein uL1, found in Lactococcus lactis subsp. cremoris (strain MG1363).